The following is a 184-amino-acid chain: MIRAIEGIITKKEPAFVVLKTAGGVSYGLFISLFCSAKLSKGEKVELNTTQIIREDANLLYGFLDTNEQKMFEMLIKLNGIGASTAMAICSSLSPNAFSNAVINGDADTFKSVPGIGPKTARRIIAELSDAKLISDESVPGYQNEALLALEALGFKREKIVKILPDLKSTSTSELVKEALKKLA.

The segment at 1–64 (MIRAIEGIIT…EDANLLYGFL (64 aa)) is domain I. A domain II region spans residues 65 to 144 (DTNEQKMFEM…SDESVPGYQN (80 aa)). Residue Asn-144 is a region of interest, flexible linker. The tract at residues 144–184 (NEALLALEALGFKREKIVKILPDLKSTSTSELVKEALKKLA) is domain III.

This sequence belongs to the RuvA family. Homotetramer. Forms an RuvA(8)-RuvB(12)-Holliday junction (HJ) complex. HJ DNA is sandwiched between 2 RuvA tetramers; dsDNA enters through RuvA and exits via RuvB. An RuvB hexamer assembles on each DNA strand where it exits the tetramer. Each RuvB hexamer is contacted by two RuvA subunits (via domain III) on 2 adjacent RuvB subunits; this complex drives branch migration. In the full resolvosome a probable DNA-RuvA(4)-RuvB(12)-RuvC(2) complex forms which resolves the HJ.

The protein localises to the cytoplasm. The RuvA-RuvB-RuvC complex processes Holliday junction (HJ) DNA during genetic recombination and DNA repair, while the RuvA-RuvB complex plays an important role in the rescue of blocked DNA replication forks via replication fork reversal (RFR). RuvA specifically binds to HJ cruciform DNA, conferring on it an open structure. The RuvB hexamer acts as an ATP-dependent pump, pulling dsDNA into and through the RuvAB complex. HJ branch migration allows RuvC to scan DNA until it finds its consensus sequence, where it cleaves and resolves the cruciform DNA. The sequence is that of Holliday junction branch migration complex subunit RuvA from Campylobacter curvus (strain 525.92).